The chain runs to 226 residues: 2-C-methyl-D-erythritol 4-phosphate cytidylyltransferase (226 aa).

This sequence belongs to the IspD/TarI cytidylyltransferase family. IspD subfamily.

The enzyme catalyses 2-C-methyl-D-erythritol 4-phosphate + CTP + H(+) = 4-CDP-2-C-methyl-D-erythritol + diphosphate. The protein operates within isoprenoid biosynthesis; isopentenyl diphosphate biosynthesis via DXP pathway; isopentenyl diphosphate from 1-deoxy-D-xylulose 5-phosphate: step 2/6. In terms of biological role, catalyzes the formation of 4-diphosphocytidyl-2-C-methyl-D-erythritol from CTP and 2-C-methyl-D-erythritol 4-phosphate (MEP). The polypeptide is 2-C-methyl-D-erythritol 4-phosphate cytidylyltransferase (Prochlorococcus marinus (strain SARG / CCMP1375 / SS120)).